A 251-amino-acid polypeptide reads, in one-letter code: Hydroxyacylglutathione hydrolase (251 aa).

Residues histidine 53, histidine 55, aspartate 57, histidine 58, histidine 110, aspartate 127, and histidine 165 each coordinate Zn(2+).

This sequence belongs to the metallo-beta-lactamase superfamily. Glyoxalase II family. In terms of assembly, monomer. It depends on Zn(2+) as a cofactor.

The catalysed reaction is an S-(2-hydroxyacyl)glutathione + H2O = a 2-hydroxy carboxylate + glutathione + H(+). It participates in secondary metabolite metabolism; methylglyoxal degradation; (R)-lactate from methylglyoxal: step 2/2. Functionally, thiolesterase that catalyzes the hydrolysis of S-D-lactoyl-glutathione to form glutathione and D-lactic acid. In Buchnera aphidicola subsp. Acyrthosiphon pisum (strain APS) (Acyrthosiphon pisum symbiotic bacterium), this protein is Hydroxyacylglutathione hydrolase.